Consider the following 410-residue polypeptide: Bifunctional malic/malolactic enzyme (410 aa).

Tyr-36 functions as the Proton donor in the catalytic mechanism. The Proton acceptor role is filled by Lys-91. The a divalent metal cation site is built by Glu-133, Asp-134, and Asp-159. NADP(+)-binding positions include 192 to 195 (AGAA), Asn-286, and Asn-317.

It belongs to the malic enzymes family. In terms of assembly, interacts with BrxC. Requires Mg(2+) as cofactor. Mn(2+) serves as cofactor.

It carries out the reaction (S)-malate + NADP(+) = pyruvate + CO2 + NADPH. It catalyses the reaction oxaloacetate + H(+) = pyruvate + CO2. The catalysed reaction is (S)-malate + H(+) = (S)-lactate + CO2. NADPH is a strong modulator that switches activity from a pyruvate-producing malic enzyme to a lactate-generating malolactic enzyme. Functionally, bifunctional enzyme with both malic and malolactic enzyme activities. In the absence of NADPH, catalyzes the reversible decarboxylation of malate to pyruvate. Can use NAD and NADP, but with a very strong preference for NADP. In the presence of excess NADPH, catalyzes the non-oxidative decarboxylation of malate to lactate. During growth on glucose, contributes to NADPH balancing via oxidation of the NADPH produced in excess by other enzymatic reactions. Can also catalyze the decarboxylation of oxaloacetate. The chain is Bifunctional malic/malolactic enzyme (ytsJ) from Bacillus subtilis (strain 168).